Here is a 263-residue protein sequence, read N- to C-terminus: Kallikrein 1-related peptidase b27 (263 aa).

The signal sequence occupies residues 1-17 (MRFLILFLALSLGGIDA). The propeptide at 18-24 (APPVQSR) is activation peptide. A Peptidase S1 domain is found at 25–260 (IIGGFKCKKN…FTSWIKDTMA (236 aa)). 5 disulfides stabilise this stretch: C31–C175, C50–C66, C154–C221, C186–C200, and C211–C236. H65 functions as the Charge relay system in the catalytic mechanism. N69 and N105 each carry an N-linked (GlcNAc...) asparagine glycan. D122 functions as the Charge relay system in the catalytic mechanism. S215 (charge relay system) is an active-site residue.

It belongs to the peptidase S1 family. Kallikrein subfamily. In terms of tissue distribution, expressed in testis and submaxillary gland. Not expressed in heart, brain, spleen, lung, liver, muscle, kidney and ovary. In the testis, expression localized specifically to Leydig cells in the interstitial tissues.

With respect to regulation, strongly inhibited by protease inhibitors diisopropyl fluorophosphate, phenylmethanesulfonyl fluoride and SBTI. Its function is as follows. Serine protease with chymotrypsin-like cleavage specificity. Shows activity towards casein, gelatin, IGFBP3 and fibronectin but not towards laminin or collagens I and IV. Does not hydrolyze kininogin to release Lys-bradykinin. This chain is Kallikrein 1-related peptidase b27 (Klk1b27), found in Mus musculus (Mouse).